The chain runs to 106 residues: Large ribosomal subunit protein P1B (106 aa).

N-acetylserine is present on serine 2. Low complexity predominate over residues 69 to 82 (AGAASGAAAAGGDA). A disordered region spans residues 69–106 (AGAASGAAAAGGDAAAEEEKEEEAAEESDDDMGFGLFD). Over residues 83 to 100 (AAEEEKEEEAAEESDDDM) the composition is skewed to acidic residues. The residue at position 96 (serine 96) is a Phosphoserine.

Belongs to the eukaryotic ribosomal protein P1/P2 family. In terms of assembly, component of the large ribosomal subunit (LSU). Mature yeast ribosomes consist of a small (40S) and a large (60S) subunit. The 40S small subunit contains 1 molecule of ribosomal RNA (18S rRNA) and 33 different proteins (encoded by 57 genes). The large 60S subunit contains 3 rRNA molecules (25S, 5.8S and 5S rRNA) and 46 different proteins (encoded by 81 genes). The 5 acidic ribosomal P-proteins form the stalk structure of the 60S subunit. They are organized as a pentameric complex in which uL10/P0 interacts with 2 heterodimers, P1A-P2B and P1B-P2A.

The protein resides in the cytoplasm. Functionally, component of the ribosome, a large ribonucleoprotein complex responsible for the synthesis of proteins in the cell. The small ribosomal subunit (SSU) binds messenger RNAs (mRNAs) and translates the encoded message by selecting cognate aminoacyl-transfer RNA (tRNA) molecules. The large subunit (LSU) contains the ribosomal catalytic site termed the peptidyl transferase center (PTC), which catalyzes the formation of peptide bonds, thereby polymerizing the amino acids delivered by tRNAs into a polypeptide chain. The nascent polypeptides leave the ribosome through a tunnel in the LSU and interact with protein factors that function in enzymatic processing, targeting, and the membrane insertion of nascent chains at the exit of the ribosomal tunnel. In Saccharomyces cerevisiae (strain ATCC 204508 / S288c) (Baker's yeast), this protein is Large ribosomal subunit protein P1B.